The chain runs to 156 residues: Small ribosomal subunit protein uS7 (156 aa).

It belongs to the universal ribosomal protein uS7 family. As to quaternary structure, part of the 30S ribosomal subunit. Contacts proteins S9 and S11.

One of the primary rRNA binding proteins, it binds directly to 16S rRNA where it nucleates assembly of the head domain of the 30S subunit. Is located at the subunit interface close to the decoding center, probably blocks exit of the E-site tRNA. The protein is Small ribosomal subunit protein uS7 of Lactobacillus delbrueckii subsp. bulgaricus (strain ATCC 11842 / DSM 20081 / BCRC 10696 / JCM 1002 / NBRC 13953 / NCIMB 11778 / NCTC 12712 / WDCM 00102 / Lb 14).